A 707-amino-acid chain; its full sequence is Caprin-1 (707 aa).

2 stretches are compositionally biased toward low complexity: residues 1-15 (MPSATSHSGSGSKSS) and 22-43 (GSSGSEAAAGAAAPASQHPATG). A disordered region spans residues 1-48 (MPSATSHSGSGSKSSGPPPPSGSSGSEAAAGAAAPASQHPATGTGAVQ). Pro2 is modified (N-acetylproline). At Ser10 the chain carries Phosphoserine. Positions 58-92 (VIDKKLRNLEKKKGKLDDYQERMNKGERLNQDQLD) form a coiled coil. Ser113 carries the phosphoserine modification. The stretch at 123 to 151 (KTIKKTARREQLMREEAEQKRLKTVLELQ) forms a coiled coil. Residue Arg163 is modified to Omega-N-methylarginine. The segment at 325–347 (LQQQPQAASPSVPEPHSLTPVAQ) is disordered. The span at 326–335 (QQQPQAASPS) shows a compositional bias: low complexity. Phosphoserine occurs at positions 333 and 341. The G3BP1-binding stretch occupies residues 358 to 379 (QDLMAQMQGPYNFIQDSMLDFE). Disordered regions lie at residues 412–443 (ESRLAQSNQVPVQPEATQVPLVSSTSEGYTAS), 523–558 (PVPPVNEPETLKQQSQYQASYNQSFSSQPHQVEQTE), and 570–620 (TYHG…RGLM). The segment covering 431-443 (PLVSSTSEGYTAS) has biased composition (polar residues). The span at 535–558 (QQSQYQASYNQSFSSQPHQVEQTE) shows a compositional bias: low complexity. The span at 572-603 (HGSQDQPHQVPGNHQQPPQQSTGFPRSSQPYY) shows a compositional bias: polar residues. Tyr623 is modified (phosphotyrosine). An omega-N-methylarginine mark is found at Arg624 and Arg631. 2 positions are modified to phosphotyrosine: Tyr634 and Tyr637. Arg638 carries the omega-N-methylarginine modification. Positions 641 to 655 (FSNTPNSGYTQSQFN) are enriched in polar residues. The interval 641-707 (FSNTPNSGYT…MPQMNTQQVN (67 aa)) is disordered. Ser642 and Ser647 each carry an O-linked (GlcNAc) serine glycan. Tyr649, Tyr660, Tyr663, and Tyr668 each carry phosphotyrosine. Low complexity-rich tracts occupy residues 674–684 (RGSGQSGPRGA) and 695–707 (NRGMPQMNTQQVN). The residue at position 696 (Arg696) is an Asymmetric dimethylarginine; alternate. Arg696 carries the omega-N-methylarginine; alternate modification.

This sequence belongs to the caprin family. As to quaternary structure, may form homomultimers. Interacts with G3BP1; interaction is direct and promotes stress granule formation. Interacts with G3BP2; interaction is direct and promotes stress granule formation. Interacts with PQBP1. Interacts with DDX3X. Interacts (when phosphorylated by EPHA4) with FMR1; interaction with FMR1 promotes formation of a membraneless compartment. Tyrosine phosphorylation by EPHA4 promotes interaction with FMR1 and liquid-liquid phase separation (LLPS) for the formation of a membraneless compartment that concentrates mRNAs with associated regulatory factors. Post-translationally, O-glycosylated (O-GlcNAcylated), in a cell cycle-dependent manner. O-glycosylation by OGT inhibit ability to undergo liquid-liquid phase separation (LLPS). Expressed in hippocampal and neocortical pyramidal neurons, but not in Purkinje cells.

It is found in the cytoplasm. Its subcellular location is the cytoplasmic ribonucleoprotein granule. It localises to the cytosol. The protein localises to the cell projection. The protein resides in the dendrite. It is found in the lamellipodium. With respect to regulation, ability to mediate liquid-liquid phase separation is regulated by ATP: moderate concentrations of ATP enhance phase separation, whereas high concentrations of ATP lead to inhibition of phase separation. MRNA-binding protein that acts as a regulator of mRNAs transport, translation and/or stability, and which is involved in neurogenesis, synaptic plasticity in neurons and cell proliferation and migration in multiple cell types. Plays an essential role in cytoplasmic stress granule formation. Acts as an mRNA regulator by mediating formation of some phase-separated membraneless compartment: undergoes liquid-liquid phase separation upon binding to target mRNAs, leading to assemble mRNAs into cytoplasmic ribonucleoprotein granules that concentrate mRNAs with associated regulatory factors. Undergoes liquid-liquid phase separation following phosphorylation and interaction with FMR1, promoting formation of cytoplasmic ribonucleoprotein granules that concentrate mRNAs with factors that inhibit translation and mediate deadenylation of target mRNAs. In these cytoplasmic ribonucleoprotein granules, CAPRIN1 mediates recruitment of CNOT7 deadenylase, leading to mRNA deadenylation and degradation. Binds directly and selectively to MYC and CCND2 mRNAs. In neuronal cells, directly binds to several mRNAs associated with RNA granules, including BDNF, CAMK2A, CREB1, MAP2, NTRK2 mRNAs, as well as to GRIN1 and KPNB1 mRNAs, but not to rRNAs. The polypeptide is Caprin-1 (Caprin1) (Rattus norvegicus (Rat)).